A 238-amino-acid chain; its full sequence is Large ribosomal subunit protein uL3 (238 aa).

Disordered regions lie at residues 140–164 (SHRS…KMPG) and 212–238 (LPKE…QEGA). Gln151 is modified (N5-methylglutamine). The span at 225 to 238 (AGGEAEAAAQQEGA) shows a compositional bias: low complexity.

Belongs to the universal ribosomal protein uL3 family. In terms of assembly, part of the 50S ribosomal subunit. Forms a cluster with proteins L14 and L19. Post-translationally, methylated by PrmB.

One of the primary rRNA binding proteins, it binds directly near the 3'-end of the 23S rRNA, where it nucleates assembly of the 50S subunit. In Bradyrhizobium diazoefficiens (strain JCM 10833 / BCRC 13528 / IAM 13628 / NBRC 14792 / USDA 110), this protein is Large ribosomal subunit protein uL3.